Here is a 75-residue protein sequence, read N- to C-terminus: Putative DNA-directed RNA polymerase subunit omega (75 aa).

The protein belongs to the RNA polymerase subunit omega family.

It localises to the plastid. The protein localises to the chloroplast. It carries out the reaction RNA(n) + a ribonucleoside 5'-triphosphate = RNA(n+1) + diphosphate. In terms of biological role, may be involved in RNA polymerase activity. The chain is Putative DNA-directed RNA polymerase subunit omega (rpoZ) from Mesostigma viride (Green alga).